The following is a 311-amino-acid chain: tRNA dimethylallyltransferase (311 aa).

9–16 (GPTAVGKT) serves as a coordination point for ATP. Position 11–16 (11–16 (TAVGKT)) interacts with substrate. Positions 34 to 37 (DSMQ) are interaction with substrate tRNA.

Belongs to the IPP transferase family. In terms of assembly, monomer. Mg(2+) serves as cofactor.

It catalyses the reaction adenosine(37) in tRNA + dimethylallyl diphosphate = N(6)-dimethylallyladenosine(37) in tRNA + diphosphate. Its function is as follows. Catalyzes the transfer of a dimethylallyl group onto the adenine at position 37 in tRNAs that read codons beginning with uridine, leading to the formation of N6-(dimethylallyl)adenosine (i(6)A). In Clostridium botulinum (strain Hall / ATCC 3502 / NCTC 13319 / Type A), this protein is tRNA dimethylallyltransferase.